An 83-amino-acid chain; its full sequence is MSFFRYLSDISSETRTLLLAYGVLGGLYLILVPLALYWWMNRRWYIMGKIERLFVYGLVFLFFPGLILLSPFLNMRLKGQGET.

2 helical membrane-spanning segments follow: residues 17–37 and 53–73; these read LLLA…LALY and LFVY…SPFL.

The protein belongs to the complex I NdhL subunit family. As to quaternary structure, NDH-1 can be composed of about 15 different subunits; different subcomplexes with different compositions have been identified which probably have different functions.

The protein resides in the plastid. It is found in the organellar chromatophore thylakoid membrane. The enzyme catalyses a plastoquinone + NADH + (n+1) H(+)(in) = a plastoquinol + NAD(+) + n H(+)(out). It carries out the reaction a plastoquinone + NADPH + (n+1) H(+)(in) = a plastoquinol + NADP(+) + n H(+)(out). Its function is as follows. NDH-1 shuttles electrons from an unknown electron donor, via FMN and iron-sulfur (Fe-S) centers, to quinones in the respiratory and/or the photosynthetic chain. The immediate electron acceptor for the enzyme in this species is believed to be plastoquinone. Couples the redox reaction to proton translocation, and thus conserves the redox energy in a proton gradient. The protein is NAD(P)H-quinone oxidoreductase subunit L, organellar chromatophore of Paulinella chromatophora.